We begin with the raw amino-acid sequence, 414 residues long: Alanine--glyoxylate aminotransferase (414 aa).

A mitochondrion-targeting transit peptide spans 1–23 (MFRALARASATLGPQVAGWARTM). At lysine 231 the chain carries N6-(pyridoxal phosphate)lysine. Residue lysine 247 is modified to N6-acetyllysine; alternate. The residue at position 247 (lysine 247) is an N6-succinyllysine; alternate. 2 positions are modified to N6-acetyllysine: lysine 256 and lysine 334. Residue arginine 382 participates in substrate binding. The Microbody targeting signal signature appears at 412 to 414 (NKL).

Belongs to the class-V pyridoxal-phosphate-dependent aminotransferase family. In terms of assembly, homodimer. The cofactor is pyridoxal 5'-phosphate.

Its subcellular location is the peroxisome. It localises to the mitochondrion matrix. The catalysed reaction is L-serine + pyruvate = 3-hydroxypyruvate + L-alanine. The enzyme catalyses glyoxylate + L-alanine = glycine + pyruvate. In terms of biological role, catalyzes the transamination of glyoxylate to glycine and contributes to the glyoxylate detoxification. Functionally, catalyzes the transamination between L-serine and pyruvate and contributes to gluconeogenesis from the L-serine metabolism. The protein is Alanine--glyoxylate aminotransferase of Felis catus (Cat).